A 79-amino-acid chain; its full sequence is RNA-binding protein Hfq (79 aa).

The Sm domain maps to 9 to 69; that stretch reads DTFLNHLRKE…ISTFTPQRPV (61 aa).

It belongs to the Hfq family. As to quaternary structure, homohexamer.

Functionally, RNA chaperone that binds small regulatory RNA (sRNAs) and mRNAs to facilitate mRNA translational regulation in response to envelope stress, environmental stress and changes in metabolite concentrations. Also binds with high specificity to tRNAs. This chain is RNA-binding protein Hfq, found in Brevibacillus brevis (strain 47 / JCM 6285 / NBRC 100599).